The chain runs to 194 residues: E3 ubiquitin-protein ligase RNF4 (194 aa).

The segment covering 1–12 (MSTRNPQRKRRG) has biased composition (basic residues). The tract at residues 1–20 (MSTRNPQRKRRGGTVNSRQT) is required for ubiquitination activity. The disordered stretch occupies residues 1–39 (MSTRNPQRKRRGGTVNSRQTQKRTRETTSTPEVSLETEP). Residues 6-65 (PQRKRRGGTVNSRQTQKRTRETTSTPEVSLETEPIELVETVGDEIVDLTCESLEPVVVDL) are mediates interaction with TRPS1. The SUMO interaction motif 1; mediates the binding to polysumoylated substrates motif lies at 40 to 43 (IELV). The SUMO interaction motif 2; mediates the binding to polysumoylated substrates motif lies at 50–53 (IVDL). The short motif at 61–63 (VVV) is the SUMO interaction motif 3; mediates the binding to polysumoylated substrates element. The SUMO interaction motif 4; mediates the binding to polysumoylated substrates motif lies at 71-74 (VVIV). Phosphoserine occurs at positions 98 and 99. The disordered stretch occupies residues 110 to 130 (VYVTTHTPRSTKDDGATGPRP). Positions 136, 139, 158, 160, 163, 166, 177, and 180 each coordinate Zn(2+). The RING-type zinc finger occupies 136 to 181 (CPICMDGYSEIVQNGRLIVSTECGHVFCSQCLRDSLKNANTCPTCR).

In terms of assembly, homodimer (via RING-type zinc finger domain). Interacts with GSC2. Interacts with AR/the androgen receptor and TBP. Interacts with TCF20. Interacts with PATZ1. Interacts with TRPS1; negatively regulates TRPS1 transcriptional repressor activity. Interacts with PML (isoform PML-1, isoform PML-2, isoform PML-3, isoform PML-4, isoform PML-5 and isoform PML-6). Interacts with PRDM1/Blimp-1. Post-translationally, sumoylated; conjugated by one or two SUMO1 moieties. In terms of processing, autoubiquitinated. As to expression, in the embryo, expressed primarily in the developing nervous system with strong expression in the dorsal root ganglia and gonads. Ubiquitously expressed in the adult.

It is found in the cytoplasm. The protein resides in the nucleus. It localises to the PML body. The catalysed reaction is S-ubiquitinyl-[E2 ubiquitin-conjugating enzyme]-L-cysteine + [acceptor protein]-L-lysine = [E2 ubiquitin-conjugating enzyme]-L-cysteine + N(6)-ubiquitinyl-[acceptor protein]-L-lysine.. It functions in the pathway protein modification; protein ubiquitination. Functionally, E3 ubiquitin-protein ligase which binds polysumoylated chains covalently attached to proteins and mediates 'Lys-6'-, 'Lys-11'-, 'Lys-48'- and 'Lys-63'-linked polyubiquitination of those substrates and their subsequent targeting to the proteasome for degradation. Regulates the degradation of several proteins including PML and the transcriptional activator PEA3. Involved in chromosome alignment and spindle assembly, it regulates the kinetochore CENPH-CENPI-CENPK complex by targeting polysumoylated CENPI to proteasomal degradation. Regulates the cellular responses to hypoxia and heat shock through degradation of respectively EPAS1 and PARP1. Alternatively, it may also bind DNA/nucleosomes and have a more direct role in the regulation of transcription for instance enhancing basal transcription and steroid receptor-mediated transcriptional activation. Catalyzes ubiquitination of sumoylated PARP1 in response to PARP1 trapping to chromatin, leading to PARP1 removal from chromatin by VCP/p97. This Mus musculus (Mouse) protein is E3 ubiquitin-protein ligase RNF4.